The primary structure comprises 381 residues: EPS I polysaccharide export outer membrane protein EpsA (381 aa).

The first 23 residues, 1-23, serve as a signal peptide directing secretion; sequence MFVSIPNIRKAVVSLSVVPLLAA. Residue cysteine 24 is the site of N-palmitoyl cysteine attachment. Cysteine 24 carries S-diacylglycerol cysteine lipidation.

This sequence belongs to the BexD/CtrA/VexA family.

The protein resides in the cell outer membrane. Functionally, probably involved in polymerization and/or export of exopolysaccharide EPS I which functions as a virulence factor. The chain is EPS I polysaccharide export outer membrane protein EpsA (epsA) from Ralstonia nicotianae (strain ATCC BAA-1114 / GMI1000) (Ralstonia solanacearum).